The chain runs to 228 residues: Cytidylate kinase (228 aa).

12–20 is a binding site for ATP; that stretch reads GPSGSGKGT.

Belongs to the cytidylate kinase family. Type 1 subfamily.

It is found in the cytoplasm. The enzyme catalyses CMP + ATP = CDP + ADP. The catalysed reaction is dCMP + ATP = dCDP + ADP. This Pseudomonas putida (strain W619) protein is Cytidylate kinase.